The chain runs to 513 residues: Histidine ammonia-lyase (513 aa).

A cross-link (5-imidazolinone (Ala-Gly)) is located at residues 144–146 (ASG). A 2,3-didehydroalanine (Ser) modification is found at Ser145.

The protein belongs to the PAL/histidase family. Contains an active site 4-methylidene-imidazol-5-one (MIO), which is formed autocatalytically by cyclization and dehydration of residues Ala-Ser-Gly.

The protein resides in the cytoplasm. It carries out the reaction L-histidine = trans-urocanate + NH4(+). It functions in the pathway amino-acid degradation; L-histidine degradation into L-glutamate; N-formimidoyl-L-glutamate from L-histidine: step 1/3. The protein is Histidine ammonia-lyase of Streptococcus pyogenes serotype M3 (strain ATCC BAA-595 / MGAS315).